Here is a 1175-residue protein sequence, read N- to C-terminus: MEAAAKTVTVRAAPLGYVYVTPIEALRRDLLALLVARSADDAAAVAPLVRGLTVEAGFAGHVAVVAGARTTGLGGGLTLKLTPNHFHPNVFFFHNGDCVPPSSAAPALSRACEAARARFGFSAYRTPVDNAEETTGAEVCARLGLAADAHAAYLVVADGFKEAVYLCNAFLHYGGAGTVSINGHEAWRVPLYPVHLFMPDVNRLVADPFNAKNRSISEEFVYPRPFFNGPLCRLLHGYVLGPAAVATRVRNLDAVARGAAHLAFDENHESAVLPADVTFTLFEQRRRGGDAAAGGLERRMASVMSADAALSLEALVAAGVYDEEPPALDDWPVLSEAGAKDGGAAAASAGAPVSQAAALGAYVSRAAGLVGALVFSSNSVLYLTEVDDAGAADARKEGAGPSFNRFYQVAAPYLAGNPQTDKDGRVLLHTASQPATAPGNHDFAMDHLVMACGFCPQLLARVLFYLERCDAGTFVGRGDVDAVRYVAGSLDAEVPCSLCDRASRPACAHTTLHRLRHRSRASARRRSPMGVFGTMNSAYSDCDVLGNYASYGALKRPNDSEPPKAIMQDTYRAAVDRLLADVAGARIGETVTDHAGFRHALRALRDTVEQAADRFVRTLVETRDFKLRDALYDANHTMSLSLDPYSGALCPATSFLARRTLLAVLQDLALSQCHGVLHGQPVEGRNFRNQFQPVLRRRVVDMLNGGFVTAKTVTVTLADGIVAPDPTKGSAEPPARDHDGDLARVSFEVLRELRVKSRVMFSTGSGSLSDAARARVAGLAGAYQRPDTAVDVLNGPLGFLLKQHHATLFPRGKPPGGQSPNPQWFWTLLQRNQLPARLLTKDDIETIAAVKRFSVDYGAINYVNLTPGTVAELAQFYLANLILRYCDHKQFFINSLTGITMQSKRPRDPAAVMAWVRRPLADAADAERAAREVLDAPRDDTWVATYTSSHLLRSVMASRPLVVLGLGVSKYHGMAGNNRVFQAGNWSGLNGGKHVCPLMVFDRTRHFVLACPRVGFTCSQTGGGAGLHDHSLGEHVKTILADGGPLVQTAVYAAVLHALGARTQHLEPDDWRAIVDDEFLAAALAEINGRVADRDGRWSVEAAAELVRDLEGQTGADGGEETAFDFGACGAGGDVAGLAPASLVPAELGGKRPPPEDDLFDMGAPPEKRLTFDML.

Residues 496–509 fold into a zinc finger; the sequence is CSLCDRASRPACAH. A Required for filament formation motif is present at residues 825-826; that stretch reads FW. Residues 1151–1175 are required for nuclear localization; the sequence is KRPPPEDDLFDMGAPPEKRLTFDML.

Belongs to the herpesviridae major DNA-binding protein family. Homooligomers. Forms double-helical filaments necessary for the formation of replication compartments within the host nucleus. Interacts with the origin-binding protein. Interacts with the helicase primase complex; this interaction stimulates primer synthesis activity of the helicase-primase complex. Interacts with the DNA polymerase. Interacts with the alkaline exonuclease; this interaction increases its nuclease processivity.

Its subcellular location is the host nucleus. Functionally, plays several crucial roles in viral infection. Participates in the opening of the viral DNA origin to initiate replication by interacting with the origin-binding protein. May disrupt loops, hairpins and other secondary structures present on ssDNA to reduce and eliminate pausing of viral DNA polymerase at specific sites during elongation. Promotes viral DNA recombination by performing strand-transfer, characterized by the ability to transfer a DNA strand from a linear duplex to a complementary single-stranded DNA circle. Can also catalyze the renaturation of complementary single strands. Additionally, reorganizes the host cell nucleus, leading to the formation of prereplicative sites and replication compartments. This process is driven by the protein which can form double-helical filaments in the absence of DNA. The protein is Major DNA-binding protein of Suid herpesvirus 1 (SuHV-1).